Here is a 627-residue protein sequence, read N- to C-terminus: Dual specificity testis-specific protein kinase 1 (627 aa).

The disordered stretch occupies residues Met-1 to Tyr-36. Residues Pro-11–Arg-30 show a composition bias toward gly residues. The region spanning Phe-52–Ile-309 is the Protein kinase domain. ATP-binding positions include Ile-58–Val-66 and Lys-81. The active-site Proton acceptor is the Asp-170. Ser-215 bears the Phosphoserine; by autocatalysis mark. Low complexity predominate over residues Ala-316–Thr-330. Disordered stretches follow at residues Ala-316–Asp-373, Arg-436–Pro-485, Cys-500–Pro-519, and Arg-532–Glu-565. Arg-338 is modified (omega-N-methylarginine). Basic and acidic residues predominate over residues Pro-348–Ser-357. Residues Val-421–Asn-525 form a required for interaction with YWHAB region. Residues Gln-528–Ala-625 are required for interaction with PARVA. The segment at Gln-528–Ser-627 is required for interaction with SPRED1 and SPRY2. Required for TESK1-mediated dephosphorylation of SPRY2 and SPRY2 inhibition of ERK phosphorylation.

This sequence belongs to the protein kinase superfamily. TKL Ser/Thr protein kinase family. As to quaternary structure, interacts (via both C- and N-termini) with SPRY4 (via C-terminus); the interaction inhibits TESK1 kinase activity. Interacts with TAOK1; the interaction inhibits TAOK1 kinase activity. Interacts (via C-terminus) with SPRED1 (via C-terminus); the interaction inhibits TESK1 kinase activity. Interacts (via C-terminus) with PARVA/PARVIN (via C-terminus); the interaction inhibits TESK1 kinase activity. Interacts with YWHAB/14-3-3 beta; the interaction is dependent on the phosphorylation of TESK1 Ser-439 and inhibits TESK1 kinase activity. Interacts with SPRY1, SPRY3 and SPRED2. Interacts (via C-terminus) with SPRY2 (via C-terminus); the interaction disrupts SPRY2 interaction with PPP2CA/PP2A-C, possibly by vesicular sequestration of SPRY2. Therefore dephosphorylation of SPRY2 by the serine/threonine-protein phosphatase 2A (PP2A) holoenzyme is lost, inhibiting its interaction with GRB2. The cofactor is Mg(2+). Mn(2+) is required as a cofactor. Post-translationally, autophosphorylated on serine and tyrosine residues. As to expression, expressed in testes and brain (at protein level).

The protein resides in the cytoplasm. Its subcellular location is the perinuclear region. It is found in the cytoskeleton. It localises to the microtubule organizing center. The protein localises to the centrosome. The protein resides in the cell projection. Its subcellular location is the lamellipodium. The catalysed reaction is L-seryl-[protein] + ATP = O-phospho-L-seryl-[protein] + ADP + H(+). The enzyme catalyses L-threonyl-[protein] + ATP = O-phospho-L-threonyl-[protein] + ADP + H(+). It carries out the reaction L-tyrosyl-[protein] + ATP = O-phospho-L-tyrosyl-[protein] + ADP + H(+). Its activity is regulated as follows. Activated by autophosphorylation on Ser-215. Kinase activity is inhibited by SPRED1. Its function is as follows. Dual specificity protein kinase activity catalyzing autophosphorylation and phosphorylation of exogenous substrates on both serine/threonine and tyrosine residues. Regulates the cellular cytoskeleton by enhancing actin stress fiber formation via phosphorylation of cofilin and by preventing microtubule breakdown via inhibition of TAOK1/MARKK kinase activity. Inhibits podocyte motility via regulation of actin cytoskeletal dynamics and phosphorylation of CFL1. Positively regulates integrin-mediated cell spreading, via phosphorylation of cofilin. Suppresses ciliogenesis via multiple pathways; phosphorylation of CFL1, suppression of ciliary vesicle directional trafficking to the ciliary base, and by facilitating YAP1 nuclear localization where it acts as a transcriptional corepressor of the TEAD4 target genes AURKA and PLK1. Probably plays a central role at and after the meiotic phase of spermatogenesis. This is Dual specificity testis-specific protein kinase 1 (Tesk1) from Mus musculus (Mouse).